The sequence spans 389 residues: Succinate--CoA ligase [ADP-forming] subunit beta (389 aa).

One can recognise an ATP-grasp domain in the interval 9–244 (KQLLAEYGIP…KTQEDPTEVI (236 aa)). ATP-binding positions include Lys-46, 53 to 55 (GRG), Gly-102, and Glu-107. Residues Asn-199 and Asp-213 each coordinate Mg(2+). Residues Asn-264 and 321–323 (GIV) each bind substrate.

It belongs to the succinate/malate CoA ligase beta subunit family. Heterotetramer of two alpha and two beta subunits. It depends on Mg(2+) as a cofactor.

The enzyme catalyses succinate + ATP + CoA = succinyl-CoA + ADP + phosphate. It carries out the reaction GTP + succinate + CoA = succinyl-CoA + GDP + phosphate. The protein operates within carbohydrate metabolism; tricarboxylic acid cycle; succinate from succinyl-CoA (ligase route): step 1/1. Its function is as follows. Succinyl-CoA synthetase functions in the citric acid cycle (TCA), coupling the hydrolysis of succinyl-CoA to the synthesis of either ATP or GTP and thus represents the only step of substrate-level phosphorylation in the TCA. The beta subunit provides nucleotide specificity of the enzyme and binds the substrate succinate, while the binding sites for coenzyme A and phosphate are found in the alpha subunit. The sequence is that of Succinate--CoA ligase [ADP-forming] subunit beta from Stenotrophomonas maltophilia (strain R551-3).